Here is a 227-residue protein sequence, read N- to C-terminus: MIVTIDGPAGSGKSTTAQRAAARLEYVYLDTGAMYRAVALGFLRAEAPATRSGAEAVLPSLTVDVEYRGDTMQVFLGDDAVTDRIRSAEVGRVVSDISTLAPVREYMVEQQRRIGRAQADRHGGVVLDGRDTGTVVFPKAPVKIFMVADIDERARRRLQEYEAAGEEVTFEEVRAEIEQRDQQDRTRDIAPLRRADDAIVFDTTDCTIAEQVDFVVDRVKAQDGRGT.

7–15 is an ATP binding site; that stretch reads GPAGSGKST.

Belongs to the cytidylate kinase family. Type 1 subfamily.

The protein resides in the cytoplasm. It catalyses the reaction CMP + ATP = CDP + ADP. The enzyme catalyses dCMP + ATP = dCDP + ADP. This is Cytidylate kinase from Salinibacter ruber (strain DSM 13855 / M31).